A 353-amino-acid chain; its full sequence is Photosystem II D2 protein (353 aa).

Thr-2 carries the N-acetylthreonine modification. A Phosphothreonine modification is found at Thr-2. A helical transmembrane segment spans residues Cys-41 to Thr-61. His-118 serves as a coordination point for chlorophyll a. Residues Gly-125 to Pro-141 form a helical membrane-spanning segment. Pheophytin a is bound by residues Gln-130 and Asn-143. A helical transmembrane segment spans residues Val-153 to Ser-166. Position 198 (His-198) interacts with chlorophyll a. The chain crosses the membrane as a helical span at residues Ala-208 to Asp-228. Residues His-215 and Phe-262 each coordinate a plastoquinone. His-215 is a binding site for Fe cation. His-269 is a binding site for Fe cation. The helical transmembrane segment at Gly-279 to Arg-295 threads the bilayer.

The protein belongs to the reaction center PufL/M/PsbA/D family. PSII is composed of 1 copy each of membrane proteins PsbA, PsbB, PsbC, PsbD, PsbE, PsbF, PsbH, PsbI, PsbJ, PsbK, PsbL, PsbM, PsbT, PsbX, PsbY, PsbZ, Psb30/Ycf12, at least 3 peripheral proteins of the oxygen-evolving complex and a large number of cofactors. It forms dimeric complexes. The cofactor is The D1/D2 heterodimer binds P680, chlorophylls that are the primary electron donor of PSII, and subsequent electron acceptors. It shares a non-heme iron and each subunit binds pheophytin, quinone, additional chlorophylls, carotenoids and lipids. There is also a Cl(-1) ion associated with D1 and D2, which is required for oxygen evolution. The PSII complex binds additional chlorophylls, carotenoids and specific lipids..

Its subcellular location is the plastid. The protein localises to the chloroplast thylakoid membrane. The enzyme catalyses 2 a plastoquinone + 4 hnu + 2 H2O = 2 a plastoquinol + O2. Functionally, photosystem II (PSII) is a light-driven water:plastoquinone oxidoreductase that uses light energy to abstract electrons from H(2)O, generating O(2) and a proton gradient subsequently used for ATP formation. It consists of a core antenna complex that captures photons, and an electron transfer chain that converts photonic excitation into a charge separation. The D1/D2 (PsbA/PsbD) reaction center heterodimer binds P680, the primary electron donor of PSII as well as several subsequent electron acceptors. D2 is needed for assembly of a stable PSII complex. The sequence is that of Photosystem II D2 protein from Welwitschia mirabilis (Tree tumbo).